The chain runs to 228 residues: Heat shock 70-related protein 4 (228 aa).

The interval 57–80 (RWHEPPGNTVFDEAHDRPQVRRPD) is disordered. The segment covering 68 to 80 (DEAHDRPQVRRPD) has biased composition (basic and acidic residues).

This sequence belongs to the heat shock protein 70 family.

The polypeptide is Heat shock 70-related protein 4 (HSP70.4) (Leishmania major).